A 395-amino-acid chain; its full sequence is Phosphoribulokinase, chloroplastic (395 aa).

The N-terminal 46 residues, Met-1 to Cys-46, are a transit peptide targeting the chloroplast. Cys-61 and Cys-100 form a disulfide bridge.

It belongs to the phosphoribulokinase family.

It localises to the plastid. Its subcellular location is the chloroplast. It carries out the reaction D-ribulose 5-phosphate + ATP = D-ribulose 1,5-bisphosphate + ADP + H(+). It functions in the pathway carbohydrate biosynthesis; Calvin cycle. Light regulated via thioredoxin by reversible oxidation/reduction of sulfhydryl/disulfide groups. The protein is Phosphoribulokinase, chloroplastic of Arabidopsis thaliana (Mouse-ear cress).